Consider the following 148-residue polypeptide: L-alanine exporter AlaE (148 aa).

4 consecutive transmembrane segments (helical) span residues 18–38 (FALV…ISGM), 49–69 (VSIP…DAFI), 88–108 (LLAY…SVGA), and 115–135 (TAVA…GYFL).

It belongs to the AlaE exporter family.

The protein resides in the cell inner membrane. Exports L-alanine. In Yersinia enterocolitica subsp. palearctica serotype O:3 (strain DSM 13030 / CIP 106945 / Y11), this protein is L-alanine exporter AlaE.